The sequence spans 116 residues: Large ribosomal subunit protein uL23 (116 aa).

This sequence belongs to the universal ribosomal protein uL23 family. Part of the 50S ribosomal subunit. Contacts protein L29, and trigger factor when it is bound to the ribosome.

Its function is as follows. One of the early assembly proteins it binds 23S rRNA. One of the proteins that surrounds the polypeptide exit tunnel on the outside of the ribosome. Forms the main docking site for trigger factor binding to the ribosome. The polypeptide is Large ribosomal subunit protein uL23 (Psychrobacter arcticus (strain DSM 17307 / VKM B-2377 / 273-4)).